Here is a 121-residue protein sequence, read N- to C-terminus: Flagellar hook-basal body complex protein FliE (121 aa).

This sequence belongs to the FliE family.

It localises to the bacterial flagellum basal body. This Saccharophagus degradans (strain 2-40 / ATCC 43961 / DSM 17024) protein is Flagellar hook-basal body complex protein FliE.